The sequence spans 280 residues: Nucleotide-binding protein Swoo_4243 (280 aa).

Residue 8–15 (GRSGSGKS) participates in ATP binding. 56 to 59 (DVRN) serves as a coordination point for GTP.

Belongs to the RapZ-like family.

Functionally, displays ATPase and GTPase activities. The sequence is that of Nucleotide-binding protein Swoo_4243 from Shewanella woodyi (strain ATCC 51908 / MS32).